Reading from the N-terminus, the 315-residue chain is Thioredoxin reductase (315 aa).

45-52 (EGSTPGGK) serves as a coordination point for FAD. A disulfide bridge links Cys-145 with Cys-148. Residue 288-297 (DCRSKHFRQI) coordinates FAD.

The protein belongs to the class-II pyridine nucleotide-disulfide oxidoreductase family. Homodimer. FAD is required as a cofactor.

The protein resides in the cytoplasm. The catalysed reaction is [thioredoxin]-dithiol + NADP(+) = [thioredoxin]-disulfide + NADPH + H(+). This chain is Thioredoxin reductase (trxB), found in Mycoplasma pneumoniae (strain ATCC 29342 / M129 / Subtype 1) (Mycoplasmoides pneumoniae).